Consider the following 229-residue polypeptide: Small ribosomal subunit protein uS3c (229 aa).

The 90-residue stretch at 39–128 (LRDNLFKQYP…RIILTILKVQ (90 aa)) folds into the KH type-2 domain.

It belongs to the universal ribosomal protein uS3 family. In terms of assembly, part of the 30S ribosomal subunit.

The protein localises to the plastid. The protein resides in the chloroplast. The sequence is that of Small ribosomal subunit protein uS3c (rps3) from Tupiella akineta (Green alga).